Reading from the N-terminus, the 190-residue chain is MNPQIRNPMKAMYPGTFYFQFKNLWEANDRNETWLCFTVEGIKRRSVVSWKTGVFRNQVDSETHCHAERCFLSWFCDDILSPNTNYQVTWYTSWSPCPECAGEVAEFLARHSNVNLTIFTARLYYFQDTDYQEGLRSLSQEGVAVKIMDYKDFKYCWENFVYNDDEPFKPWKGLKYNFRFLKRRLQEILE.

The 110-residue stretch at 29–138 folds into the CMP/dCMP-type deaminase domain; the sequence is DRNETWLCFT…TDYQEGLRSL (110 aa). Positions 66, 97, and 100 each coordinate Zn(2+).

The protein belongs to the cytidine and deoxycytidylate deaminase family. As to quaternary structure, homodimer. Interacts with TRIB3. Requires Zn(2+) as cofactor.

The protein resides in the nucleus. The protein localises to the cytoplasm. The enzyme catalyses a 2'-deoxycytidine in single-stranded DNA + H2O + H(+) = a 2'-deoxyuridine in single-stranded DNA + NH4(+). Functionally, DNA deaminase (cytidine deaminase) which acts as an inhibitor of retrovirus replication and retrotransposon mobility via deaminase-dependent and -independent mechanisms. May also play a role in the epigenetic regulation of gene expression through the process of active DNA demethylation. The chain is DNA dC-&gt;dU-editing enzyme APOBEC-3C (APOBEC3C) from Gorilla gorilla gorilla (Western lowland gorilla).